The sequence spans 198 residues: Recombination protein RecR (198 aa).

The C4-type zinc finger occupies 57–72; it reads CSVCGHITDQDPCAIC. The Toprim domain occupies 80-175; sequence SLICVVQDPK…RTTRIAHGLP (96 aa).

It belongs to the RecR family.

May play a role in DNA repair. It seems to be involved in an RecBC-independent recombinational process of DNA repair. It may act with RecF and RecO. This Oceanobacillus iheyensis (strain DSM 14371 / CIP 107618 / JCM 11309 / KCTC 3954 / HTE831) protein is Recombination protein RecR.